Consider the following 518-residue polypeptide: Arginyl-tRNA--protein transferase 1 (518 aa).

Over residues 149–165 (ESLQSEGKNSKKEEPHE) the composition is skewed to basic and acidic residues. A disordered region spans residues 149 to 207 (ESLQSEGKNSKKEEPHELLQSQDSVGEKLGSGEPSHSVKVHTVPKPGKGADLSKPPCRK). Phosphoserine is present on Ser169.

Belongs to the R-transferase family. Monomer. Interacts with LIAT1; LIAT1 is not a substrate of ATE1, the interaction takes place in the cytoplasm and seems to increase ATE1 arginyltransferase activity.

Its subcellular location is the nucleus. It localises to the cytoplasm. It carries out the reaction an N-terminal L-alpha-aminoacyl-[protein] + L-arginyl-tRNA(Arg) = an N-terminal L-arginyl-L-aminoacyl-[protein] + tRNA(Arg) + H(+). In terms of biological role, involved in the post-translational conjugation of arginine to the N-terminal aspartate or glutamate of a protein. This arginylation is required for degradation of the protein via the ubiquitin pathway. Does not arginylate cysteine residues. The protein is Arginyl-tRNA--protein transferase 1 (ATE1) of Macaca fascicularis (Crab-eating macaque).